The sequence spans 420 residues: Histidine--tRNA ligase (420 aa).

It belongs to the class-II aminoacyl-tRNA synthetase family. Homodimer.

The protein resides in the cytoplasm. It carries out the reaction tRNA(His) + L-histidine + ATP = L-histidyl-tRNA(His) + AMP + diphosphate + H(+). This is Histidine--tRNA ligase from Clostridioides difficile (strain 630) (Peptoclostridium difficile).